The chain runs to 143 residues: UPF0179 protein PTO0851 (143 aa).

This sequence belongs to the UPF0179 family.

The polypeptide is UPF0179 protein PTO0851 (Picrophilus torridus (strain ATCC 700027 / DSM 9790 / JCM 10055 / NBRC 100828 / KAW 2/3)).